The primary structure comprises 471 residues: tRNA-2-methylthio-N(6)-dimethylallyladenosine synthase (471 aa).

Residues 31-149 (LYYHIETYGC…FPQLLWEALN (119 aa)) enclose the MTTase N-terminal domain. The [4Fe-4S] cluster site is built by Cys-40, Cys-76, Cys-110, Cys-186, Cys-190, and Cys-193. In terms of domain architecture, Radical SAM core spans 172-402 (RDSNLKAWVN…IELQNKISLE (231 aa)). Residues 405-468 (AELRGKIVEV…AWTMQGELVE (64 aa)) form the TRAM domain.

The protein belongs to the methylthiotransferase family. MiaB subfamily. Monomer. It depends on [4Fe-4S] cluster as a cofactor.

It is found in the cytoplasm. The catalysed reaction is N(6)-dimethylallyladenosine(37) in tRNA + (sulfur carrier)-SH + AH2 + 2 S-adenosyl-L-methionine = 2-methylsulfanyl-N(6)-dimethylallyladenosine(37) in tRNA + (sulfur carrier)-H + 5'-deoxyadenosine + L-methionine + A + S-adenosyl-L-homocysteine + 2 H(+). Functionally, catalyzes the methylthiolation of N6-(dimethylallyl)adenosine (i(6)A), leading to the formation of 2-methylthio-N6-(dimethylallyl)adenosine (ms(2)i(6)A) at position 37 in tRNAs that read codons beginning with uridine. The protein is tRNA-2-methylthio-N(6)-dimethylallyladenosine synthase of Thermoanaerobacter pseudethanolicus (strain ATCC 33223 / 39E) (Clostridium thermohydrosulfuricum).